We begin with the raw amino-acid sequence, 49 residues long: Large ribosomal subunit protein bL33B (49 aa).

This sequence belongs to the bacterial ribosomal protein bL33 family.

The polypeptide is Large ribosomal subunit protein bL33B (Limosilactobacillus reuteri subsp. reuteri (strain JCM 1112) (Lactobacillus reuteri)).